Consider the following 498-residue polypeptide: Protein flp (498 aa).

A run of 4 helical transmembrane segments spans residues 6–26 (LYFL…IYIT), 389–409 (FNIV…FSAY), 433–453 (LSLC…YLIL), and 471–491 (LALI…LLFL).

It is found in the cell membrane. In terms of biological role, its precise function is unknown. Has no penicillin-binding activity and is not involved in methicillin resistance. The chain is Protein flp (flp) from Staphylococcus aureus (strain COL).